A 402-amino-acid chain; its full sequence is Putative cystathionine beta-lyase (402 aa).

The residue at position 236 (Lys236) is an N6-(pyridoxal phosphate)lysine.

The protein belongs to the class-II pyridoxal-phosphate-dependent aminotransferase family. MalY/PatB cystathionine beta-lyase subfamily. Pyridoxal 5'-phosphate is required as a cofactor.

The enzyme catalyses L,L-cystathionine + H2O = L-homocysteine + pyruvate + NH4(+). The catalysed reaction is an S-substituted L-cysteine + H2O = a thiol + pyruvate + NH4(+). The protein operates within amino-acid biosynthesis; L-methionine biosynthesis via de novo pathway; L-homocysteine from L-cystathionine: step 1/1. This chain is Putative cystathionine beta-lyase, found in Mycobacterium leprae (strain TN).